The chain runs to 251 residues: Thiamine thiazole synthase (251 aa).

NAD(+)-binding positions include Ser-34, 53 to 54, Gly-61, Val-125, and 151 to 153; these read EK and HVD. Asp-153 and His-168 together coordinate Fe cation. Met-216 provides a ligand contact to NAD(+). Arg-226 provides a ligand contact to glycine.

It belongs to the THI4 family. Homooctamer; tetramer of dimers. Fe(2+) is required as a cofactor.

The catalysed reaction is hydrogen sulfide + glycine + NAD(+) = ADP-5-ethyl-4-methylthiazole-2-carboxylate + nicotinamide + 3 H2O + H(+). The protein operates within cofactor biosynthesis; thiamine diphosphate biosynthesis. Functionally, involved in the biosynthesis of the thiazole moiety of thiamine. Catalyzes the conversion of NAD and glycine to adenosine diphosphate 5-(2-hydroxyethyl)-4-methylthiazole-2-carboxylate (ADT), an adenylated thiazole intermediate, using free sulfide as a source of sulfur. The sequence is that of Thiamine thiazole synthase from Thermococcus kodakarensis (strain ATCC BAA-918 / JCM 12380 / KOD1) (Pyrococcus kodakaraensis (strain KOD1)).